A 522-amino-acid polypeptide reads, in one-letter code: Protein nucleotidyltransferase YdiU (522 aa).

The ATP site is built by G109, G111, R112, K132, D144, G145, R195, and R202. Catalysis depends on D271, which acts as the Proton acceptor. Positions 272 and 281 each coordinate Mg(2+). Residue D281 participates in ATP binding.

It belongs to the SELO family. It depends on Mg(2+) as a cofactor. Mn(2+) serves as cofactor.

It catalyses the reaction L-seryl-[protein] + ATP = 3-O-(5'-adenylyl)-L-seryl-[protein] + diphosphate. It carries out the reaction L-threonyl-[protein] + ATP = 3-O-(5'-adenylyl)-L-threonyl-[protein] + diphosphate. The enzyme catalyses L-tyrosyl-[protein] + ATP = O-(5'-adenylyl)-L-tyrosyl-[protein] + diphosphate. The catalysed reaction is L-histidyl-[protein] + UTP = N(tele)-(5'-uridylyl)-L-histidyl-[protein] + diphosphate. It catalyses the reaction L-seryl-[protein] + UTP = O-(5'-uridylyl)-L-seryl-[protein] + diphosphate. It carries out the reaction L-tyrosyl-[protein] + UTP = O-(5'-uridylyl)-L-tyrosyl-[protein] + diphosphate. Its function is as follows. Nucleotidyltransferase involved in the post-translational modification of proteins. It can catalyze the addition of adenosine monophosphate (AMP) or uridine monophosphate (UMP) to a protein, resulting in modifications known as AMPylation and UMPylation. This Burkholderia vietnamiensis (strain G4 / LMG 22486) (Burkholderia cepacia (strain R1808)) protein is Protein nucleotidyltransferase YdiU.